The sequence spans 161 residues: ATP synthase subunit b (161 aa).

A helical membrane pass occupies residues 2–22 (VIEWGTALYQLLAFAVLLLIL).

This sequence belongs to the ATPase B chain family. F-type ATPases have 2 components, F(1) - the catalytic core - and F(0) - the membrane proton channel. F(1) has five subunits: alpha(3), beta(3), gamma(1), delta(1), epsilon(1). F(0) has three main subunits: a(1), b(2) and c(10-14). The alpha and beta chains form an alternating ring which encloses part of the gamma chain. F(1) is attached to F(0) by a central stalk formed by the gamma and epsilon chains, while a peripheral stalk is formed by the delta and b chains.

It localises to the cell membrane. F(1)F(0) ATP synthase produces ATP from ADP in the presence of a proton or sodium gradient. F-type ATPases consist of two structural domains, F(1) containing the extramembraneous catalytic core and F(0) containing the membrane proton channel, linked together by a central stalk and a peripheral stalk. During catalysis, ATP synthesis in the catalytic domain of F(1) is coupled via a rotary mechanism of the central stalk subunits to proton translocation. Functionally, component of the F(0) channel, it forms part of the peripheral stalk, linking F(1) to F(0). The sequence is that of ATP synthase subunit b from Shouchella clausii (strain KSM-K16) (Alkalihalobacillus clausii).